We begin with the raw amino-acid sequence, 204 residues long: Outer-membrane lipoprotein LolB (204 aa).

The first 16 residues, Met1–Gly16, serve as a signal peptide directing secretion. Cys17 carries the N-palmitoyl cysteine lipid modification. Residue Cys17 is the site of S-diacylglycerol cysteine attachment.

The protein belongs to the LolB family. In terms of assembly, monomer.

It is found in the cell outer membrane. Functionally, plays a critical role in the incorporation of lipoproteins in the outer membrane after they are released by the LolA protein. The polypeptide is Outer-membrane lipoprotein LolB (Ectopseudomonas mendocina (strain ymp) (Pseudomonas mendocina)).